We begin with the raw amino-acid sequence, 37 residues long: VCRDWFKETACRHAKSLGNCRTSQKYRANCAKTCELC.

The region spanning 2-37 is the ShKT domain; that stretch reads CRDWFKETACRHAKSLGNCRTSQKYRANCAKTCELC. Intrachain disulfides connect cysteine 2/cysteine 37, cysteine 11/cysteine 30, and cysteine 20/cysteine 34. The segment at 25 to 26 is crucial for binding to potassium channels; the sequence is KY.

It belongs to the sea anemone type 1 potassium channel toxin family. Type 1b subfamily.

The protein localises to the secreted. Its subcellular location is the nematocyst. Functionally, inhibits voltage-dependent potassium channels of the Kv1 family (Kv1.1/KCNA1 (Kd=6 nM), Kv1.2/KCNA2 (Kd=15 nM), Kv1.3/KCNA3 (Kd=10-39 nM), Kv1.6/KCNA6, and KCa3.1/KCNN4 (Kd=172 nM)). The polypeptide is Kappa-actitoxin-Bgr1a (Bunodosoma granuliferum (Red warty sea anemone)).